Reading from the N-terminus, the 141-residue chain is Large ribosomal subunit protein uL11 (141 aa).

It belongs to the universal ribosomal protein uL11 family. Part of the ribosomal stalk of the 50S ribosomal subunit. Interacts with L10 and the large rRNA to form the base of the stalk. L10 forms an elongated spine to which L12 dimers bind in a sequential fashion forming a multimeric L10(L12)X complex. In terms of processing, one or more lysine residues are methylated.

Forms part of the ribosomal stalk which helps the ribosome interact with GTP-bound translation factors. The sequence is that of Large ribosomal subunit protein uL11 from Chlorobaculum parvum (strain DSM 263 / NCIMB 8327) (Chlorobium vibrioforme subsp. thiosulfatophilum).